A 364-amino-acid polypeptide reads, in one-letter code: Ribosomal RNA large subunit methyltransferase M (364 aa).

Residues serine 198, 231–234 (APGG), aspartate 250, aspartate 270, and aspartate 286 each bind S-adenosyl-L-methionine. The active-site Proton acceptor is the lysine 315.

This sequence belongs to the class I-like SAM-binding methyltransferase superfamily. RNA methyltransferase RlmE family. RlmM subfamily. As to quaternary structure, monomer.

It is found in the cytoplasm. It carries out the reaction cytidine(2498) in 23S rRNA + S-adenosyl-L-methionine = 2'-O-methylcytidine(2498) in 23S rRNA + S-adenosyl-L-homocysteine + H(+). Its function is as follows. Catalyzes the 2'-O-methylation at nucleotide C2498 in 23S rRNA. This chain is Ribosomal RNA large subunit methyltransferase M, found in Azoarcus sp. (strain BH72).